Here is a 54-residue protein sequence, read N- to C-terminus: Ductus ejaculatorius peptide 99B (54 aa).

The signal sequence occupies residues 1–21; it reads MKTPLFLLLVVLASLLGLALS. Position 22 is a pyrrolidone carboxylic acid (Gln-22). Asn-25 carries N-linked (GlcNAc...) asparagine glycosylation. Cys-40 and Cys-52 are joined by a disulfide. Positions 53 to 54 are excised as a propeptide; sequence RK.

It to paragonial peptide B. In terms of tissue distribution, ductus ejaculatorius.

The protein resides in the secreted. In terms of biological role, induces post-mating responses; increased oviposition and reduced receptivity. This chain is Ductus ejaculatorius peptide 99B (Dup99B), found in Drosophila melanogaster (Fruit fly).